Here is a 136-residue protein sequence, read N- to C-terminus: Ribosome-binding factor A (136 aa).

The disordered stretch occupies residues 114-136; sequence DRANRPGPAADEPDEPDEPEDRR. Acidic residues predominate over residues 124–136; it reads DEPDEPDEPEDRR.

The protein belongs to the RbfA family. Monomer. Binds 30S ribosomal subunits, but not 50S ribosomal subunits or 70S ribosomes.

Its subcellular location is the cytoplasm. In terms of biological role, one of several proteins that assist in the late maturation steps of the functional core of the 30S ribosomal subunit. Associates with free 30S ribosomal subunits (but not with 30S subunits that are part of 70S ribosomes or polysomes). Required for efficient processing of 16S rRNA. May interact with the 5'-terminal helix region of 16S rRNA. This chain is Ribosome-binding factor A, found in Bordetella petrii (strain ATCC BAA-461 / DSM 12804 / CCUG 43448).